A 28-amino-acid chain; its full sequence is Chassatide C12 (28 aa).

A cross-link (cyclopeptide (Glu-Asn)) is located at residues 1-28 (EYCGESCYLIPCFTPGCYCVSRQCVNKN). Cystine bridges form between Cys3/Cys17, Cys7/Cys19, and Cys12/Cys24.

This is a cyclic peptide. Expressed in fruit, pedicel, leaf and stem but not in root (at protein level).

Functionally, probably participates in a plant defense mechanism. In Chassalia chartacea (Chassalia curviflora), this protein is Chassatide C12.